A 397-amino-acid polypeptide reads, in one-letter code: Succinyl-diaminopimelate desuccinylase (397 aa).

His-73 lines the Zn(2+) pocket. Asp-75 is a catalytic residue. Position 106 (Asp-106) interacts with Zn(2+). Residue Glu-140 is the Proton acceptor of the active site. Positions 141, 169, and 366 each coordinate Zn(2+).

This sequence belongs to the peptidase M20A family. DapE subfamily. In terms of assembly, homodimer. It depends on Zn(2+) as a cofactor. Requires Co(2+) as cofactor.

The catalysed reaction is N-succinyl-(2S,6S)-2,6-diaminopimelate + H2O = (2S,6S)-2,6-diaminopimelate + succinate. It participates in amino-acid biosynthesis; L-lysine biosynthesis via DAP pathway; LL-2,6-diaminopimelate from (S)-tetrahydrodipicolinate (succinylase route): step 3/3. Catalyzes the hydrolysis of N-succinyl-L,L-diaminopimelic acid (SDAP), forming succinate and LL-2,6-diaminopimelate (DAP), an intermediate involved in the bacterial biosynthesis of lysine and meso-diaminopimelic acid, an essential component of bacterial cell walls. The chain is Succinyl-diaminopimelate desuccinylase from Sinorhizobium medicae (strain WSM419) (Ensifer medicae).